Consider the following 120-residue polypeptide: Large ribosomal subunit protein uL18 (120 aa).

Belongs to the universal ribosomal protein uL18 family. In terms of assembly, part of the 50S ribosomal subunit; part of the 5S rRNA/L5/L18/L25 subcomplex. Contacts the 5S and 23S rRNAs.

This is one of the proteins that bind and probably mediate the attachment of the 5S RNA into the large ribosomal subunit, where it forms part of the central protuberance. The protein is Large ribosomal subunit protein uL18 of Bartonella tribocorum (strain CIP 105476 / IBS 506).